A 368-amino-acid polypeptide reads, in one-letter code: WD repeat-containing protein RUP2 (368 aa).

WD repeat units lie at residues Ser-38–Ala-77, Cys-97–Glu-138, Glu-141–Val-184, Ile-192–Leu-232, Gly-236–Glu-276, Val-279–Val-318, and Ser-330–Pro-368.

Interacts with UVR8.

It localises to the nucleus. The protein resides in the cytoplasm. Its subcellular location is the cytosol. Functions in association with RUP1 as repressor of UV-B-induced photomorphogenesis mediated by UVR8 and HY5. Plays a crucial negative feedback regulatory role downstream of UVR8-COP1 to inhibit UVR8 function, balance UV-B-specific responses and ensure normal plant growth. Is involved in the regulation of photoperiodic flowering and vegetative development. May act as negative regulator of photoperiodic flowering by suppressing flowering through the action of CONSTANS (CO) and FLOWERING LOCUS T (FT). The polypeptide is WD repeat-containing protein RUP2 (RUP2) (Arabidopsis thaliana (Mouse-ear cress)).